Here is a 942-residue protein sequence, read N- to C-terminus: Calcium-activated chloride channel regulator 2 (942 aa).

Residues 1 to 32 (MTHRDSTGPVIGLKLVTLLFTLSPELLFLGAG) form the signal peptide. Over 33 to 905 (LKLKENGYDG…SRDDLILKGV (873 aa)) the chain is Extracellular. A metalloprotease domain region spans residues 54–205 (DLKLITNIKE…CSSDITGVFV (152 aa)). N74 and N97 each carry an N-linked (GlcNAc...) asparagine glycan. A Zn(2+)-binding site is contributed by H164. E165 is a catalytic residue. Zn(2+) contacts are provided by H168 and D175. N-linked (GlcNAc...) asparagine glycans are attached at residues N231, N235, N254, and N286. The region spanning 311–483 (VVCLVIDVSR…NGMTEAFVRI (173 aa)) is the VWFA domain. N-linked (GlcNAc...) asparagine glycosylation is found at N522, N580, N637, and N821. Residues 906 to 926 (LTTVGLIAILCLIMVVAHCIF) traverse the membrane as a helical segment. Over 927 to 942 (NRKKRPSRKENETKFL) the chain is Cytoplasmic.

Belongs to the CLCR family. The translation product is autoproteolytically cleaved by the metalloprotease domain in the endoplasmic reticulum into a N-terminal and a C-terminal products that remain physically associated with each other. The cleavage is necessary for calcium-activated chloride channel (CaCC) activation activity. Post-translationally, N-glycosylated. Highly expressed in eye, spleen, lung, kidney, uterus, and endothelial cells. Weakly expressed in heart and throughout the gastrointestinal tract. Highly expressed in mammary cell lines. Its expression in immortalized cell line HC11 correlates with slow or arrested growth. Re-expression in mammary tumor cells reduces colony survival.

The protein resides in the cell membrane. It is found in the basal cell membrane. The protein localises to the cell junction. Its function is as follows. Plays a role in modulating chloride current across the plasma membrane in a calcium-dependent manner, and cell adhesion. Involved in basal cell adhesion and/or stratification of squamous epithelia. May act as a tumor suppressor in breast and colorectal cancer. Plays a key role for cell adhesion in the beginning stages of lung metastasis via the binding to ITGB4. The chain is Calcium-activated chloride channel regulator 2 (Clca2) from Mus musculus (Mouse).